A 905-amino-acid polypeptide reads, in one-letter code: DNA gyrase subunit A (905 aa).

The Topo IIA-type catalytic domain maps to 35-524 (IPDVRDGLKP…GEFDQDIEDL (490 aa)). Tyr123 (O-(5'-phospho-DNA)-tyrosine intermediate) is an active-site residue. The short motif at 551–557 (QKRGGKG) is the GyrA-box element. The segment at 882–905 (IAESSDDNEEDSEFEEEVAEEGSE) is disordered. A compositionally biased stretch (acidic residues) spans 885–905 (SSDDNEEDSEFEEEVAEEGSE).

This sequence belongs to the type II topoisomerase GyrA/ParC subunit family. As to quaternary structure, heterotetramer, composed of two GyrA and two GyrB chains. In the heterotetramer, GyrA contains the active site tyrosine that forms a transient covalent intermediate with DNA, while GyrB binds cofactors and catalyzes ATP hydrolysis.

The protein resides in the cytoplasm. It catalyses the reaction ATP-dependent breakage, passage and rejoining of double-stranded DNA.. Its function is as follows. A type II topoisomerase that negatively supercoils closed circular double-stranded (ds) DNA in an ATP-dependent manner to modulate DNA topology and maintain chromosomes in an underwound state. Negative supercoiling favors strand separation, and DNA replication, transcription, recombination and repair, all of which involve strand separation. Also able to catalyze the interconversion of other topological isomers of dsDNA rings, including catenanes and knotted rings. Type II topoisomerases break and join 2 DNA strands simultaneously in an ATP-dependent manner. The protein is DNA gyrase subunit A of Rickettsia bellii (strain RML369-C).